We begin with the raw amino-acid sequence, 469 residues long: Uronate isomerase (469 aa).

It belongs to the metallo-dependent hydrolases superfamily. Uronate isomerase family.

The catalysed reaction is D-glucuronate = D-fructuronate. It carries out the reaction aldehydo-D-galacturonate = keto-D-tagaturonate. It participates in carbohydrate metabolism; pentose and glucuronate interconversion. In Rhizobium meliloti (strain 1021) (Ensifer meliloti), this protein is Uronate isomerase.